We begin with the raw amino-acid sequence, 502 residues long: Probable cytosol aminopeptidase (502 aa).

The Mn(2+) site is built by K269 and D274. K281 is a catalytic residue. Positions 292, 351, and 353 each coordinate Mn(2+). R355 is an active-site residue.

Belongs to the peptidase M17 family. It depends on Mn(2+) as a cofactor.

The protein resides in the cytoplasm. The catalysed reaction is Release of an N-terminal amino acid, Xaa-|-Yaa-, in which Xaa is preferably Leu, but may be other amino acids including Pro although not Arg or Lys, and Yaa may be Pro. Amino acid amides and methyl esters are also readily hydrolyzed, but rates on arylamides are exceedingly low.. It catalyses the reaction Release of an N-terminal amino acid, preferentially leucine, but not glutamic or aspartic acids.. Presumably involved in the processing and regular turnover of intracellular proteins. Catalyzes the removal of unsubstituted N-terminal amino acids from various peptides. This chain is Probable cytosol aminopeptidase, found in Photobacterium profundum (strain SS9).